We begin with the raw amino-acid sequence, 374 residues long: MKRQRIVIKIGSSSLTTKQGALDLEKLEGYVRAIVNLRKAGHEVILISSGAVAAGFSRLGYPVRPTTMAGKQAAAAVGQALLMQHYMERFHQHGIIAAQLLLTRKDFQNQTQYTNAYSALMELLKRGALPIINENDSTSIAELTFGDNDMLSALVSGLIHAHTLCILTDVNGLYDANPKTHPNAKRYQYLPTIPDEMLQMGGEAGSNVGTGGMKSKVAAAQTALSLGVDVFIGKASGEHALLDILSGKGDGTYVGNTGDLMEGKTKQWIRLHSPVSGVVRIDQGAERAIMNEGKSLLPAGVTSVHGTFQAGDVVHIWNEQNKVIAKGQVTLSSEQLRKVQGRKSDEAKQLIPLVRDEVVHRDQLVIQEKELNES.

K9 provides a ligand contact to ATP. 3 residues coordinate substrate: S49, D136, and N148. ATP is bound by residues 168 to 169 (TD) and 210 to 216 (TGGMKSK). The PUA domain maps to 276–354 (SGVVRIDQGA…DEAKQLIPLV (79 aa)).

This sequence belongs to the glutamate 5-kinase family.

The protein resides in the cytoplasm. It catalyses the reaction L-glutamate + ATP = L-glutamyl 5-phosphate + ADP. It participates in amino-acid biosynthesis; L-proline biosynthesis; L-glutamate 5-semialdehyde from L-glutamate: step 1/2. Functionally, catalyzes the transfer of a phosphate group to glutamate to form L-glutamate 5-phosphate. This Halalkalibacterium halodurans (strain ATCC BAA-125 / DSM 18197 / FERM 7344 / JCM 9153 / C-125) (Bacillus halodurans) protein is Glutamate 5-kinase.